Reading from the N-terminus, the 270-residue chain is UPF0354 protein BcerKBAB4_4524 (270 aa).

It belongs to the UPF0354 family.

This is UPF0354 protein BcerKBAB4_4524 from Bacillus mycoides (strain KBAB4) (Bacillus weihenstephanensis).